Consider the following 192-residue polypeptide: Epididymal-specific lipocalin-5 (192 aa).

A signal peptide spans 1–26; that stretch reads MCSVARHMESIMLFTLLGLCVGLAAG. A disulfide bridge connects residues Cys-89 and Cys-183.

Belongs to the calycin superfamily. Lipocalin family. In terms of processing, 2 different forms with differently processed N-termini exist. As to expression, epididymal fluid of the caudal and corpus regions (at protein level).

Its subcellular location is the secreted. Functionally, associates with spermatozoa in the epididymal fluid but does not bind tightly to them. Binds both all-trans and 13-cis retinoic acid. May act as a retinoid carrier protein which is required for epididymal function and/or sperm maturation. This chain is Epididymal-specific lipocalin-5, found in Mus musculus (Mouse).